Reading from the N-terminus, the 664-residue chain is Cytoskeleton-associated protein 2 (664 aa).

Positions 1 to 38 (MAESRKRFLGRAARNPLPVTRDLQLPPTRRDQPAFREQ) are disordered. Residues 28–38 (TRRDQPAFREQ) are compositionally biased toward basic and acidic residues. An association with alpha- and beta-tubulin region spans residues 160 to 319 (PKQDSNVSKK…ASKDAARTDS (160 aa)). S186 carries the post-translational modification Phosphoserine. Disordered stretches follow at residues 254–273 (IRSLHSSSHGAAKQGLSRPL), 283–328 (LDKE…MVKP), 366–393 (GKGKGLKRPPHSVVTQAEPKGQSENPVG), and 512–545 (AHATKEPIQEVNADANVGSGKPGEENEHHGKVEV). Residues 300–309 (GSSQAPSRSI) show a composition bias toward polar residues. A compositionally biased stretch (basic residues) spans 366–375 (GKGKGLKRPP). Residues 533–545 (PGEENEHHGKVEV) show a composition bias toward basic and acidic residues. Residue T561 is modified to Phosphothreonine. S577 carries the phosphoserine modification. T579 is subject to Phosphothreonine. Residue S584 is modified to Phosphoserine.

It belongs to the CKAP2 family. In terms of assembly, associates with alpha- and beta-tubulins.

It localises to the cytoplasm. The protein resides in the cytoskeleton. The protein localises to the spindle. Its subcellular location is the spindle pole. Its function is as follows. Possesses microtubule stabilizing properties. Involved in regulating aneuploidy, cell cycling, and cell death in a p53-dependent manner. The protein is Cytoskeleton-associated protein 2 of Mus musculus (Mouse).